A 388-amino-acid polypeptide reads, in one-letter code: MRTLRRLKFMSSPSLSDLGKREPAAAADERGTQQRRACANATWNSIHNGVIAVFQRKGLPDQELFSLNEGVRQLLKTELGSFFTEYLQNQLLTKGMVILRDKIRFYEGQKLLDSLAETWDFFFSDVLPMLQAIFYPVQGKEPSVRQLALLHFRNAITLSVKLEDALARAHARVPPAIVQMLLVLQGVHESRGVTEDYLRLETLVQKVVSPYLGTYGLHSSEGPFTHSCILEKRLLRRSRSGDVLAKNPVVRSKSYNTPLLNPVQEHEAEGAAAGGTSIRRHSVSEMTSCPEPQGFSDPPGQGPTGTFRSSPAPHSGPCPSRLYPTTQPPEQGLDPTRSSLPRSSPENLVDQILESVDSDSEGIFIDFGRGRGSGMSDLEGSGGRQSVV.

2 interaction with RICTOR regions span residues M10–G95 and H188–H218. Residues S12–G31 form a disordered region. A compositionally biased stretch (basic and acidic residues) spans L18–G31. S252 is subject to Phosphoserine. Residues S254 to V388 form a disordered region. Residues T336–E346 are compositionally biased toward polar residues.

Belongs to the PROTOR family. Associated component of the mechanistic target of rapamycin complex 2 (mTORC2). Binds directly to MTOR and RICTOR within the TORC2 complex. As to expression, most abundant in kidney and liver. Also highly expressed in brain, spleen, testis and placenta. Overexpressed in several colorectal tumors.

In terms of biological role, associated subunit of mTORC2, which regulates cell growth and survival in response to hormonal signals. mTORC2 is activated by growth factors, but, in contrast to mTORC1, seems to be nutrient-insensitive. mTORC2 seems to function upstream of Rho GTPases to regulate the actin cytoskeleton, probably by activating one or more Rho-type guanine nucleotide exchange factors. PRR5 plays an important role in regulation of PDGFRB expression and in modulation of platelet-derived growth factor signaling. May act as a tumor suppressor in breast cancer. The chain is Proline-rich protein 5 (PRR5) from Homo sapiens (Human).